A 484-amino-acid polypeptide reads, in one-letter code: Cobyric acid synthase (484 aa).

The GATase cobBQ-type domain occupies 251 to 438; that stretch reads ALKIAVPVLP…LHGLFCSDAY (188 aa). Residue Cys-333 is the Nucleophile of the active site. His-430 is an active-site residue.

The protein belongs to the CobB/CobQ family. CobQ subfamily.

It functions in the pathway cofactor biosynthesis; adenosylcobalamin biosynthesis. In terms of biological role, catalyzes amidations at positions B, D, E, and G on adenosylcobyrinic A,C-diamide. NH(2) groups are provided by glutamine, and one molecule of ATP is hydrogenolyzed for each amidation. In Rhizobium rhizogenes (strain K84 / ATCC BAA-868) (Agrobacterium radiobacter), this protein is Cobyric acid synthase.